Here is a 203-residue protein sequence, read N- to C-terminus: dITP/XTP pyrophosphatase (203 aa).

Residue 15 to 20 participates in substrate binding; that stretch reads SGNAGK. Positions 45 and 74 each coordinate Mg(2+). Residue aspartate 74 is the Proton acceptor of the active site. Substrate-binding positions include serine 75, 153–156, lysine 176, and 181–182; these read FGYD and HR.

Belongs to the HAM1 NTPase family. As to quaternary structure, homodimer. It depends on Mg(2+) as a cofactor.

The enzyme catalyses XTP + H2O = XMP + diphosphate + H(+). The catalysed reaction is dITP + H2O = dIMP + diphosphate + H(+). It catalyses the reaction ITP + H2O = IMP + diphosphate + H(+). Its function is as follows. Pyrophosphatase that catalyzes the hydrolysis of nucleoside triphosphates to their monophosphate derivatives, with a high preference for the non-canonical purine nucleotides XTP (xanthosine triphosphate), dITP (deoxyinosine triphosphate) and ITP. Seems to function as a house-cleaning enzyme that removes non-canonical purine nucleotides from the nucleotide pool, thus preventing their incorporation into DNA/RNA and avoiding chromosomal lesions. This Prochlorococcus marinus (strain MIT 9313) protein is dITP/XTP pyrophosphatase.